The chain runs to 225 residues: O-methyltransferase rstn1 (225 aa).

Positions 97 and 142 each coordinate S-adenosyl-L-methionine.

The protein belongs to the methyltransferase superfamily.

The enzyme catalyses desmethylrestrictinol + S-adenosyl-L-methionine = restrictinol + S-adenosyl-L-homocysteine + H(+). It participates in antifungal biosynthesis. Its function is as follows. O-methyltransferase; part of the gene cluster that mediates the biosynthesis of the tetrahydropyranyl antifungal agent restricticin that acts as an inhibitor of CYP51 and blocks the ergosterol biosynthesis. Within the pathway, rstn1 uses S-adenosylmethionine to methylate position C4 of desmethylrestrictinol to produce restrictinol. The highly reducing polyketide synthase rstn3, the short chain dehydrogenase rstn4, the cyclase rstn5, the FAD-dependent monooxygenase rstn6 and the enoylreductase rstn7 are required to generate the first stable intermediate desmethylrestrictinol. Rstn3 with rstn7 biosynthesize the first polyketide chain intermediate that is reduced by rstn4, followed by epoxidation by rstn6 before 6-endo cyclization via epoxide opening by rstn5 leads to desmethylrestrictinol. The methyltransferase rstn1 then catalyzes the C4 O-methylation of desmethylrestrictinol to produce restrictinol, and the nonribosomal peptide synthetase rstn8 catalyzes the C3 esterification of restrictinol with glycine that leads to restricticin. In Aspergillus nomiae NRRL (strain ATCC 15546 / NRRL 13137 / CBS 260.88 / M93), this protein is O-methyltransferase rstn1.